A 66-amino-acid chain; its full sequence is Sec-independent protein translocase protein TatA (66 aa).

Residues 1 to 21 (MIGGLGMPELIIILVIILIIF) traverse the membrane as a helical segment. The interval 45–66 (RDAELNEGDKDDKEKEQEKLDK) is disordered.

This sequence belongs to the TatA/E family. As to quaternary structure, the Tat system comprises two distinct complexes: a TatABC complex, containing multiple copies of TatA, TatB and TatC subunits, and a separate TatA complex, containing only TatA subunits. Substrates initially bind to the TatABC complex, which probably triggers association of the separate TatA complex to form the active translocon.

It is found in the cell inner membrane. Its function is as follows. Part of the twin-arginine translocation (Tat) system that transports large folded proteins containing a characteristic twin-arginine motif in their signal peptide across membranes. TatA could form the protein-conducting channel of the Tat system. The polypeptide is Sec-independent protein translocase protein TatA (Desulforapulum autotrophicum (strain ATCC 43914 / DSM 3382 / VKM B-1955 / HRM2) (Desulfobacterium autotrophicum)).